Reading from the N-terminus, the 285-residue chain is Probable endonuclease 4 (285 aa).

Positions 69, 109, 145, 179, 182, 216, 229, 231, and 261 each coordinate Zn(2+).

It belongs to the AP endonuclease 2 family. The cofactor is Zn(2+).

The enzyme catalyses Endonucleolytic cleavage to 5'-phosphooligonucleotide end-products.. Endonuclease IV plays a role in DNA repair. It cleaves phosphodiester bonds at apurinic or apyrimidinic (AP) sites, generating a 3'-hydroxyl group and a 5'-terminal sugar phosphate. This Salmonella paratyphi A (strain AKU_12601) protein is Probable endonuclease 4.